Consider the following 201-residue polypeptide: 3-isopropylmalate dehydratase small subunit (201 aa).

Belongs to the LeuD family. LeuD type 1 subfamily. Heterodimer of LeuC and LeuD.

It carries out the reaction (2R,3S)-3-isopropylmalate = (2S)-2-isopropylmalate. Its pathway is amino-acid biosynthesis; L-leucine biosynthesis; L-leucine from 3-methyl-2-oxobutanoate: step 2/4. In terms of biological role, catalyzes the isomerization between 2-isopropylmalate and 3-isopropylmalate, via the formation of 2-isopropylmaleate. This is 3-isopropylmalate dehydratase small subunit from Rhizobium meliloti (strain 1021) (Ensifer meliloti).